Reading from the N-terminus, the 402-residue chain is MAKEKFERTKPHINIGTIGHVDHGKTTLTAAITAVLAVAGDTELMDYDAIDNAPEERERGITIATSHVEYETATRHYAHVDCPGHADYVKNMITGAAQMDGAILVIAATDGPMAQTREHILLSKQVGVPYIVVFLNKEDQLDDEDKEEMLELVEMEVRELLSEYDFPGDDTPIVAGSAFQALEEAKTGTLGEWSAKIMELMDAVDEYIPEPKRETDKDFLMAIEDIFTIQGRGTVVTGKVDRGQVCVGDEVEIVGLKDTQKTTVTGVEMFRKEMDCGIAGDNCGVLIRGIDKEAVQRGMVLCKPGSITPHTQFEAEVYVLTKEEGGRHTPFFDNYRPQFYVRTTDVTGSVKLQEGTEMVMPGDNVKINVELIAPIALDEGTRFAIREGGRTVGAGVVSKIIA.

The region spanning 10–212 is the tr-type G domain; it reads KPHINIGTIG…AVDEYIPEPK (203 aa). The G1 stretch occupies residues 19 to 26; it reads GHVDHGKT. GTP is bound at residue 19–26; the sequence is GHVDHGKT. Mg(2+) is bound at residue Thr26. The G2 stretch occupies residues 60 to 64; it reads GITIA. Residues 81–84 are G3; it reads DCPG. Residues 81 to 85 and 136 to 139 each bind GTP; these read DCPGH and NKED. The segment at 136–139 is G4; sequence NKED. The G5 stretch occupies residues 177–179; that stretch reads SAF.

Belongs to the TRAFAC class translation factor GTPase superfamily. Classic translation factor GTPase family. EF-Tu/EF-1A subfamily. In terms of assembly, monomer.

The protein resides in the cytoplasm. It carries out the reaction GTP + H2O = GDP + phosphate + H(+). GTP hydrolase that promotes the GTP-dependent binding of aminoacyl-tRNA to the A-site of ribosomes during protein biosynthesis. In Sulfurovum sp. (strain NBC37-1), this protein is Elongation factor Tu.